The sequence spans 426 residues: MSKSENLYSAARELIPGGVNSPVRAFTGVGGTPLFIEKADGAYLYDVDGKAYIDYVGSWGPMVLGHNHPAIRNAVIEAAERGLSFGAPTEMEVKMAQLVTELVPTMDMVRMVNSGTEATMSAIRLARGFTGRDKIIKFEGCYHGHADCLLVKAGSGALTLGQPNSPGVPADFAKYTLTCTYNDLASVRAAFEQYPQEIACIIVEPVAGNMNCVPPLPEFLPGLRALCDEFGALLIIDEVMTGFRVALAGAQDYYGVVPDLTCLGKIIGGGMPVGAFGGRRDVMDALAPTGPVYQAGTLSGNPIAMAAGFACLNEVAQPGVHETLDELTTRLAEGLLEAAEEAGIPLVVNHVGGMFGIFFTDAESVTCYQDVMACDVERFKRFFHMMLDEGVYLAPSAFEAGFMSVAHSMEDINNTIDAARRVFAKL.

Residue lysine 265 is modified to N6-(pyridoxal phosphate)lysine.

Belongs to the class-III pyridoxal-phosphate-dependent aminotransferase family. HemL subfamily. As to quaternary structure, homodimer. Requires pyridoxal 5'-phosphate as cofactor.

The protein localises to the cytoplasm. It carries out the reaction (S)-4-amino-5-oxopentanoate = 5-aminolevulinate. The protein operates within porphyrin-containing compound metabolism; protoporphyrin-IX biosynthesis; 5-aminolevulinate from L-glutamyl-tRNA(Glu): step 2/2. The polypeptide is Glutamate-1-semialdehyde 2,1-aminomutase (Escherichia coli (strain K12 / DH10B)).